The primary structure comprises 427 residues: Serine hydroxymethyltransferase (427 aa).

(6S)-5,6,7,8-tetrahydrofolate contacts are provided by residues Leu-122 and 126–128 (GHL). An N6-(pyridoxal phosphate)lysine modification is found at Lys-231. Residue 355–357 (SPF) participates in (6S)-5,6,7,8-tetrahydrofolate binding.

It belongs to the SHMT family. Homodimer. It depends on pyridoxal 5'-phosphate as a cofactor.

It is found in the cytoplasm. It carries out the reaction (6R)-5,10-methylene-5,6,7,8-tetrahydrofolate + glycine + H2O = (6S)-5,6,7,8-tetrahydrofolate + L-serine. It participates in one-carbon metabolism; tetrahydrofolate interconversion. It functions in the pathway amino-acid biosynthesis; glycine biosynthesis; glycine from L-serine: step 1/1. Its function is as follows. Catalyzes the reversible interconversion of serine and glycine with tetrahydrofolate (THF) serving as the one-carbon carrier. This reaction serves as the major source of one-carbon groups required for the biosynthesis of purines, thymidylate, methionine, and other important biomolecules. Also exhibits THF-independent aldolase activity toward beta-hydroxyamino acids, producing glycine and aldehydes, via a retro-aldol mechanism. The polypeptide is Serine hydroxymethyltransferase (Nostoc punctiforme (strain ATCC 29133 / PCC 73102)).